The sequence spans 77 residues: Secapin (77 aa).

The N-terminal stretch at 1-32 (MKNYSKNATHLITVLLFSFVVILLIIPSKCEA) is a signal peptide. The propeptide occupies 33 to 52 (VSNDMQPLEARSADLVPEPR). A disulfide bridge connects residues Cys61 and Cys72.

Belongs to the secapin family. As to expression, expressed by the venom gland.

The protein resides in the secreted. In terms of biological role, serine protease inhibitor which exhibits antifibrinolytic, antielastolytic and antimicrobial activities. Displays antimicrobial activity against bacteria and fungi. Likely functions in the innate immune response to microbial infection and possibly in the venom, as an antifibrinolytic agent. Not toxic to mice but does induce slight sedation at higher doses (from 40 mg/kg). At a dose of 80 mg/kg, sedation occurs 15 minutes after injection and is accompanied by piloerection and hypothermia. The polypeptide is Secapin (Apis mellifera (Honeybee)).